Here is a 456-residue protein sequence, read N- to C-terminus: Bifunctional protein GlmU (456 aa).

The segment at 1 to 229 is pyrophosphorylase; sequence MTKKALSAVI…VMEVEGANNR (229 aa). Residues 11-14, K25, Q76, 81-82, 103-105, G140, E154, N169, and N227 contribute to the UDP-N-acetyl-alpha-D-glucosamine site; these read LAAG, GT, and YGD. D105 lines the Mg(2+) pocket. Residue N227 participates in Mg(2+) binding. The tract at residues 230 to 250 is linker; it reads LQLAALERYFQNKQASKLLLE. Residues 251-456 are N-acetyltransferase; that stretch reads GVMIYDPARF…QGWQRPIKKK (206 aa). Residues R333 and K351 each coordinate UDP-N-acetyl-alpha-D-glucosamine. The active-site Proton acceptor is the H363. UDP-N-acetyl-alpha-D-glucosamine contacts are provided by Y366 and N377. Residues A380, 386–387, S405, A423, and R440 each bind acetyl-CoA; that span reads NY.

In the N-terminal section; belongs to the N-acetylglucosamine-1-phosphate uridyltransferase family. This sequence in the C-terminal section; belongs to the transferase hexapeptide repeat family. In terms of assembly, homotrimer. Mg(2+) serves as cofactor.

The protein resides in the cytoplasm. It carries out the reaction alpha-D-glucosamine 1-phosphate + acetyl-CoA = N-acetyl-alpha-D-glucosamine 1-phosphate + CoA + H(+). The enzyme catalyses N-acetyl-alpha-D-glucosamine 1-phosphate + UTP + H(+) = UDP-N-acetyl-alpha-D-glucosamine + diphosphate. The protein operates within nucleotide-sugar biosynthesis; UDP-N-acetyl-alpha-D-glucosamine biosynthesis; N-acetyl-alpha-D-glucosamine 1-phosphate from alpha-D-glucosamine 6-phosphate (route II): step 2/2. It participates in nucleotide-sugar biosynthesis; UDP-N-acetyl-alpha-D-glucosamine biosynthesis; UDP-N-acetyl-alpha-D-glucosamine from N-acetyl-alpha-D-glucosamine 1-phosphate: step 1/1. It functions in the pathway bacterial outer membrane biogenesis; LPS lipid A biosynthesis. Catalyzes the last two sequential reactions in the de novo biosynthetic pathway for UDP-N-acetylglucosamine (UDP-GlcNAc). The C-terminal domain catalyzes the transfer of acetyl group from acetyl coenzyme A to glucosamine-1-phosphate (GlcN-1-P) to produce N-acetylglucosamine-1-phosphate (GlcNAc-1-P), which is converted into UDP-GlcNAc by the transfer of uridine 5-monophosphate (from uridine 5-triphosphate), a reaction catalyzed by the N-terminal domain. This is Bifunctional protein GlmU from Haemophilus influenzae (strain ATCC 51907 / DSM 11121 / KW20 / Rd).